Consider the following 368-residue polypeptide: Chaperone protein DnaJ (368 aa).

In terms of domain architecture, J spans 5 to 75 (DFYKILGVEK…TKRKQYDKFG (71 aa)). The segment at 139 to 222 (GKEISQKLTK…CRGKTIVETK (84 aa)) adopts a CR-type zinc-finger fold. Cys-152, Cys-155, Cys-169, Cys-172, Cys-196, Cys-199, Cys-210, and Cys-213 together coordinate Zn(2+). CXXCXGXG motif repeat units lie at residues 152-159 (CDNCKGSG), 169-176 (CYNCQGRG), 196-203 (CSVCLGSG), and 210-217 (CKKCRGKT).

This sequence belongs to the DnaJ family. In terms of assembly, homodimer. Zn(2+) is required as a cofactor.

The protein resides in the cytoplasm. Its function is as follows. Participates actively in the response to hyperosmotic and heat shock by preventing the aggregation of stress-denatured proteins and by disaggregating proteins, also in an autonomous, DnaK-independent fashion. Unfolded proteins bind initially to DnaJ; upon interaction with the DnaJ-bound protein, DnaK hydrolyzes its bound ATP, resulting in the formation of a stable complex. GrpE releases ADP from DnaK; ATP binding to DnaK triggers the release of the substrate protein, thus completing the reaction cycle. Several rounds of ATP-dependent interactions between DnaJ, DnaK and GrpE are required for fully efficient folding. Also involved, together with DnaK and GrpE, in the DNA replication of plasmids through activation of initiation proteins. The polypeptide is Chaperone protein DnaJ (Mesomycoplasma hyopneumoniae (strain 232) (Mycoplasma hyopneumoniae)).